Here is a 133-residue protein sequence, read N- to C-terminus: Ribosome-binding factor A (133 aa).

This sequence belongs to the RbfA family. As to quaternary structure, monomer. Binds 30S ribosomal subunits, but not 50S ribosomal subunits or 70S ribosomes.

It is found in the cytoplasm. Functionally, one of several proteins that assist in the late maturation steps of the functional core of the 30S ribosomal subunit. Associates with free 30S ribosomal subunits (but not with 30S subunits that are part of 70S ribosomes or polysomes). Required for efficient processing of 16S rRNA. May interact with the 5'-terminal helix region of 16S rRNA. This Salmonella typhimurium (strain LT2 / SGSC1412 / ATCC 700720) protein is Ribosome-binding factor A.